We begin with the raw amino-acid sequence, 132 residues long: Fluoride-specific ion channel FluC 3 (132 aa).

4 consecutive transmembrane segments (helical) span residues 4–24 (ILLV…FGGW), 32–52 (FPVG…LIMY), 66–86 (IFLT…GYES), and 95–115 (LMLM…AVYL). Residues glycine 74 and threonine 77 each contribute to the Na(+) site.

This sequence belongs to the fluoride channel Fluc/FEX (TC 1.A.43) family.

The protein resides in the cell membrane. It catalyses the reaction fluoride(in) = fluoride(out). Its activity is regulated as follows. Na(+) is not transported, but it plays an essential structural role and its presence is essential for fluoride channel function. Functionally, fluoride-specific ion channel. Important for reducing fluoride concentration in the cell, thus reducing its toxicity. This is Fluoride-specific ion channel FluC 3 from Methanosarcina barkeri (strain Fusaro / DSM 804).